A 363-amino-acid polypeptide reads, in one-letter code: Anthranilate phosphoribosyltransferase (363 aa).

5-phospho-alpha-D-ribose 1-diphosphate contacts are provided by residues Gly85, Gly88–Asp89, Thr93, Asn95–Thr98, Lys113–Ser121, and Ala125. An anthranilate-binding site is contributed by Gly85. Ser97 contributes to the Mg(2+) binding site. Asn116 lines the anthranilate pocket. Position 171 (Arg171) interacts with anthranilate. The Mg(2+) site is built by Asp233 and Glu234.

Belongs to the anthranilate phosphoribosyltransferase family. Homodimer. Requires Mg(2+) as cofactor.

It carries out the reaction N-(5-phospho-beta-D-ribosyl)anthranilate + diphosphate = 5-phospho-alpha-D-ribose 1-diphosphate + anthranilate. It functions in the pathway amino-acid biosynthesis; L-tryptophan biosynthesis; L-tryptophan from chorismate: step 2/5. In terms of biological role, catalyzes the transfer of the phosphoribosyl group of 5-phosphorylribose-1-pyrophosphate (PRPP) to anthranilate to yield N-(5'-phosphoribosyl)-anthranilate (PRA). The polypeptide is Anthranilate phosphoribosyltransferase (Gluconobacter oxydans (strain 621H) (Gluconobacter suboxydans)).